The chain runs to 483 residues: Protein adenylyltransferase Fic (483 aa).

Residues 20-42 form a helical membrane-spanning segment; the sequence is AFFFIAGSLATFVFHALTSSSSV. 2 TPR repeats span residues 107-140 and 141-175; these read ALGA…APKH and PEVL…SPSN. Residues 232–237 carry the Inhibitory (S/T)XXXE(G/N) motif motif; sequence SVGIEG. Residues Glu236 and 317–320 contribute to the ATP site; that span reads VGGH. The 136-residue stretch at 286–421 folds into the Fido domain; it reads ITLKDILELH…IRPFVRFIAD (136 aa). His364 is a catalytic residue. ATP contacts are provided by residues 368–375, 400–401, and Asn408; these read DGNGRTSR and YY. The disordered stretch occupies residues 464 to 483; that stretch reads SAPEPYESGSGLDSGVNGMP.

It belongs to the fic family. Homodimer.

The protein localises to the membrane. It catalyses the reaction L-tyrosyl-[protein] + ATP = O-(5'-adenylyl)-L-tyrosyl-[protein] + diphosphate. The catalysed reaction is L-threonyl-[protein] + ATP = 3-O-(5'-adenylyl)-L-threonyl-[protein] + diphosphate. The enzyme catalyses 3-O-(5'-adenylyl)-L-threonyl-[protein] + H2O = L-threonyl-[protein] + AMP + H(+). With respect to regulation, the side chain of Glu-236 determines which of the two opposing activities (AMPylase or de-AMPylase) will take place. In response to endoplasmic reticulum stress, mediates de-AMPylase activity. Adenylyltransferase activity is inhibited by the inhibitory helix present at the N-terminus: Glu-236 binds ATP and competes with ATP-binding at Arg-375, thereby preventing adenylyltransferase activity. In unstressed cells, disengagement of Glu-236 promotes adenylyltransferase activity. Activation dissociates ATP-binding from Glu-236, allowing ordered binding of the entire ATP moiety with the alpha-phosphate in an orientation that is productive for accepting an incoming target hydroxyl side chain. Protein that can both mediate the addition of adenosine 5'-monophosphate (AMP) to specific residues of target proteins (AMPylation), and the removal of the same modification from target proteins (de-AMPylation), depending on the context. The side chain of Glu-236 determines which of the two opposing activities (AMPylase or de-AMPylase) will take place. Acts as a key regulator of the unfolded protein response (UPR) by mediating AMPylation or de-AMPylation of Hsc70-3/BiP. In unstressed cells, acts as an adenylyltransferase by mediating AMPylation of Hsc70-3/BiP at 'Thr-518', thereby inactivating it. In response to endoplasmic reticulum stress, acts as a phosphodiesterase by mediating removal of ATP (de-AMPylation) from Hsc70-3/BiP at 'Thr-518', leading to restore HSPA5/BiP activity. This Drosophila grimshawi (Hawaiian fruit fly) protein is Protein adenylyltransferase Fic.